The following is a 36-amino-acid chain: uncharacterized protein (36 aa).

Its subcellular location is the mitochondrion. This is an uncharacterized protein from Saccharomyces cerevisiae (strain ATCC 204508 / S288c) (Baker's yeast).